The primary structure comprises 152 residues: Deoxyuridine 5'-triphosphate nucleotidohydrolase (152 aa).

Substrate is bound by residues 72–74, Asn85, and 89–91; these read RSG and TID.

The protein belongs to the dUTPase family. Mg(2+) is required as a cofactor.

It catalyses the reaction dUTP + H2O = dUMP + diphosphate + H(+). The protein operates within pyrimidine metabolism; dUMP biosynthesis; dUMP from dCTP (dUTP route): step 2/2. Functionally, this enzyme is involved in nucleotide metabolism: it produces dUMP, the immediate precursor of thymidine nucleotides and it decreases the intracellular concentration of dUTP so that uracil cannot be incorporated into DNA. In Afipia carboxidovorans (strain ATCC 49405 / DSM 1227 / KCTC 32145 / OM5) (Oligotropha carboxidovorans), this protein is Deoxyuridine 5'-triphosphate nucleotidohydrolase.